The following is a 359-amino-acid chain: Peptide chain release factor 1 (359 aa).

Glutamine 236 is modified (N5-methylglutamine). A disordered region spans residues 288 to 308; that stretch reads QDEQDAERKSTIGTGDRSERI. Positions 293-308 are enriched in basic and acidic residues; sequence AERKSTIGTGDRSERI.

Belongs to the prokaryotic/mitochondrial release factor family. In terms of processing, methylated by PrmC. Methylation increases the termination efficiency of RF1.

It is found in the cytoplasm. Its function is as follows. Peptide chain release factor 1 directs the termination of translation in response to the peptide chain termination codons UAG and UAA. This is Peptide chain release factor 1 from Streptococcus uberis (strain ATCC BAA-854 / 0140J).